The primary structure comprises 131 residues: Small ribosomal subunit protein eS17 (131 aa).

Belongs to the eukaryotic ribosomal protein eS17 family.

This Drosophila melanogaster (Fruit fly) protein is Small ribosomal subunit protein eS17 (RpS17).